Here is a 57-residue protein sequence, read N- to C-terminus: Protein CgkB (57 aa).

This Pseudoalteromonas carrageenovora (Alteromonas carrageenovora) protein is Protein CgkB (cgkB).